A 367-amino-acid chain; its full sequence is Beta sliding clamp (367 aa).

Belongs to the beta sliding clamp family. As to quaternary structure, forms a ring-shaped head-to-tail homodimer around DNA which binds and tethers DNA polymerases and other proteins to the DNA. The DNA replisome complex has a single clamp-loading complex (3 tau and 1 each of delta, delta', psi and chi subunits) which binds 3 Pol III cores (1 core on the leading strand and 2 on the lagging strand) each with a beta sliding clamp dimer. Additional proteins in the replisome are other copies of gamma, psi and chi, Ssb, DNA helicase and RNA primase.

Its subcellular location is the cytoplasm. Its function is as follows. Confers DNA tethering and processivity to DNA polymerases and other proteins. Acts as a clamp, forming a ring around DNA (a reaction catalyzed by the clamp-loading complex) which diffuses in an ATP-independent manner freely and bidirectionally along dsDNA. Initially characterized for its ability to contact the catalytic subunit of DNA polymerase III (Pol III), a complex, multichain enzyme responsible for most of the replicative synthesis in bacteria; Pol III exhibits 3'-5' exonuclease proofreading activity. The beta chain is required for initiation of replication as well as for processivity of DNA replication. The protein is Beta sliding clamp (dnaN) of Proteus mirabilis.